Consider the following 408-residue polypeptide: 3-ketoacyl-CoA thiolase A, peroxisomal (408 aa).

The active-site Acyl-thioester intermediate is the Cys112. Residues His366 and Cys394 each act as proton acceptor in the active site.

The protein belongs to the thiolase-like superfamily. Thiolase family. As to quaternary structure, homodimer.

It is found in the peroxisome. It carries out the reaction an acyl-CoA + acetyl-CoA = a 3-oxoacyl-CoA + CoA. The protein operates within lipid metabolism; fatty acid metabolism. This Candida tropicalis (Yeast) protein is 3-ketoacyl-CoA thiolase A, peroxisomal.